Here is a 968-residue protein sequence, read N- to C-terminus: Catenin delta-1 (968 aa).

Met1 carries the post-translational modification N-acetylmethionine. The tract at residues 1–357 (MDDSEVESTA…ASLDSLRKGG (357 aa)) is necessary and sufficient for interaction with CCDC85B. Ser4 is subject to Phosphoserine. Residues 10–46 (ASILASVKEQEAQFEKLTRALEEERRHVSAQLERVRV) are a coiled coil. Phosphoserine is present on Ser47. Thr59 is subject to Phosphothreonine. A Phosphotyrosine; by FYN modification is found at Tyr112. Phosphoserine is present on Ser125. A phosphotyrosine mark is found at Tyr217 and Tyr221. Ser225 is subject to Phosphoserine. The residue at position 228 (Tyr228) is a Phosphotyrosine. Ser230 and Ser252 each carry phosphoserine. Tyr257 carries the phosphotyrosine modification. Residues Ser268 and Ser269 each carry the phosphoserine modification. Position 280 is a phosphotyrosine (Tyr280). Residue Ser288 is modified to Phosphoserine; by PAK5. Position 291 is a phosphotyrosine (Tyr291). Residues 299–306 (MSDYGTAR) carry the Nuclear localization signal (NLS) motif. Ser300 bears the Phosphoserine mark. Phosphothreonine is present on Thr304. 4 positions are modified to phosphoserine: Ser320, Ser346, Ser349, and Ser352. 4 ARM repeats span residues 358-395 (PPPP…HLCY), 398-437 (DKVK…NISF), 441-475 (QDNK…ITGT), and 476-516 (LWNL…NEDC). Lys421 is covalently cross-linked (Glycyl lysine isopeptide (Lys-Gly) (interchain with G-Cter in SUMO2)). Lys517 participates in a covalent cross-link: Glycyl lysine isopeptide (Lys-Gly) (interchain with G-Cter in SUMO2). A Nuclear localization signal (NLS) motif is present at residues 521–528 (IEWESVLT). ARM repeat units lie at residues 534–573 (LRNV…DSDS), 583–624 (LRNL…AKKG), 653–693 (ARGY…NLCA), 700–739 (RYIR…NLAV), 740–780 (DARN…SILN), and 781–826 (TINE…ALVL). 4 positions are modified to phosphothreonine: Ile566, Asp572, Ser587, and Glu593. The Nuclear localization signal (NLS) signature appears at 568-575 (QKDSDSKL). Ser617 carries the phosphoserine modification. The Nuclear localization signal (NLS) motif lies at 622 to 629 (KKGKDEWF). Ser713 carries the post-translational modification Phosphoserine. A phosphothreonine mark is found at Glu788, Lys794, and Asn809. Ser811 is modified (phosphoserine). Residues Ser815, Leu835, and Lys841 each carry the phosphothreonine modification. Ser847 carries the post-translational modification Phosphoserine. A disordered region spans residues 855 to 944 (NASRSQSSHS…LMQDEGQESL (90 aa)). Phosphothreonine is present on Ala856. Phosphoserine is present on residues Ser857, Ser859, and Ser861. The residue at position 862 (Ser862) is a Phosphothreonine. Ser864 carries the phosphoserine modification. Position 865 is a phosphotyrosine (Tyr865). Phosphoserine is present on Ser868. A Phosphothreonine modification is found at Thr869. Basic and acidic residues predominate over residues 875–888 (RNQKSDKKPDREEI). Ser879 is subject to Phosphoserine. Lys882 is covalently cross-linked (Glycyl lysine isopeptide (Lys-Gly) (interchain with G-Cter in SUMO2)). Residues Gln889 and Ser895 each carry the phosphothreonine modification. Residues 889–908 (QMSNMGSNTKSLDNNYSTPN) are compositionally biased toward polar residues. The residue at position 899 (Ser899) is a Phosphoserine. Tyr904 is subject to Phosphotyrosine. Thr906, Arg910, and Thr916 each carry phosphothreonine. Basic and acidic residues predominate over residues 909-922 (ERGDHNRTLDRSGD). Ser920 and Ser943 each carry phosphoserine.

This sequence belongs to the beta-catenin family. Belongs to a multiprotein cell-cell adhesion complex that also contains E-cadherin/CDH1, alpha-catenin/CTNNA1, beta-catenin/CTNNB1, and gamma-catenin/JUP. Component of a cadherin:catenin adhesion complex composed of at least of CDH26, beta-catenin/CTNNB1, alpha-catenin/CTNNA1 and p120 catenin/CTNND1. Binds to the C-terminal fragment of PSEN1 and mutually competes for CDH1. Interacts with ZBTB33. Interacts with GLIS2. Interacts with FER. Interacts with NANOS1 (via N-terminal region). Interacts (via N-terminus) with GNA12; the interaction regulates CDH1-mediated cell-cell adhesion. Interacts with GNA13. Interacts with CCDC85B. Interacts with PLPP3; negatively regulates the PLPP3-mediated stabilization of CTNNB1. Interacts with DSG3; the interaction facilitates DSG3 localization and retention at cell-cell junctions. Interacts with CTNND1/p120-catenin; the interaction controls CADH5 endocytosis. In terms of processing, phosphorylated by FER and other protein-tyrosine kinases. Phosphorylated at Ser-288 by PAK5. Dephosphorylated by PTPRJ. As to expression, expressed in vascular endothelium. Melanocytes and melanoma cells primarily express the long isoform 1A, whereas keratinocytes express shorter isoforms, especially 3A. The shortest isoform 4A, is detected in normal keratinocytes and melanocytes, and generally lost from cells derived from squamous cell carcinomas or melanomas. The C-terminal alternatively spliced exon B is present in the p120ctn transcripts in the colon, intestine and prostate, but lost in several tumor tissues derived from these organs.

It localises to the cell junction. Its subcellular location is the adherens junction. It is found in the cytoplasm. The protein resides in the nucleus. The protein localises to the cell membrane. In terms of biological role, key regulator of cell-cell adhesion that associates with and regulates the cell adhesion properties of both C-, E- and N-cadherins, being critical for their surface stability. Promotes localization and retention of DSG3 at cell-cell junctions, via its interaction with DSG3. Beside cell-cell adhesion, regulates gene transcription through several transcription factors including ZBTB33/Kaiso2 and GLIS2, and the activity of Rho family GTPases and downstream cytoskeletal dynamics. Implicated both in cell transformation by SRC and in ligand-induced receptor signaling through the EGF, PDGF, CSF-1 and ERBB2 receptors. This Homo sapiens (Human) protein is Catenin delta-1.